The primary structure comprises 221 residues: Sigma non-opioid intracellular receptor 1 (221 aa).

At 1–4 (MALW) the chain is on the lumenal side. Residues 5–27 (RGLRAVLAVAGLAVAVQLLRGWL) form a helical membrane-spanning segment. Topologically, residues 28-221 (GSKSYVFNRE…STHLSELGFF (194 aa)) are cytoplasmic. The segment at 96 to 103 (SLTEYVLL) is important for ligand-binding. The tract at residues 174–221 (FIPSTLGFALADTIFSTQDFLTLFYTVKVYGKALLLETSTHLSELGFF) is C-terminal hydrophobic region.

This sequence belongs to the ERG2 family. Homotrimer.

Its subcellular location is the nucleus inner membrane. The protein localises to the nucleus outer membrane. It localises to the nucleus envelope. It is found in the cytoplasmic vesicle. The protein resides in the endoplasmic reticulum membrane. Its subcellular location is the membrane. May function in lipid transport from the endoplasmic reticulum and be involved in a wide array of cellular functions probably through regulation of the biogenesis of lipid microdomains at the plasma membrane. May regulate calcium efflux at the endoplasmic reticulum. The polypeptide is Sigma non-opioid intracellular receptor 1 (sigmar1) (Xenopus tropicalis (Western clawed frog)).